A 290-amino-acid chain; its full sequence is Fructose-1,6-bisphosphatase class 1 (290 aa).

Mg(2+) contacts are provided by E78, D96, L98, and D99. Residues 99-102 (DGSS), Y201, and K226 each bind substrate. E232 contacts Mg(2+).

It belongs to the FBPase class 1 family. As to quaternary structure, homotetramer. It depends on Mg(2+) as a cofactor.

It is found in the cytoplasm. The catalysed reaction is beta-D-fructose 1,6-bisphosphate + H2O = beta-D-fructose 6-phosphate + phosphate. It participates in carbohydrate biosynthesis; gluconeogenesis. The sequence is that of Fructose-1,6-bisphosphatase class 1 from Helicobacter pylori (strain Shi470).